Reading from the N-terminus, the 239-residue chain is Ribosomal RNA small subunit methyltransferase G (239 aa).

S-adenosyl-L-methionine is bound by residues glycine 77, phenylalanine 82, alanine 128–glutamate 129, and arginine 147. Positions arginine 219–lysine 239 are disordered.

It belongs to the methyltransferase superfamily. RNA methyltransferase RsmG family.

It is found in the cytoplasm. Functionally, specifically methylates the N7 position of guanine in position 535 of 16S rRNA. This chain is Ribosomal RNA small subunit methyltransferase G, found in Bacillus cytotoxicus (strain DSM 22905 / CIP 110041 / 391-98 / NVH 391-98).